Consider the following 259-residue polypeptide: UPF0246 protein PSHAa2558 (259 aa).

This sequence belongs to the UPF0246 family.

This is UPF0246 protein PSHAa2558 from Pseudoalteromonas translucida (strain TAC 125).